Consider the following 209-residue polypeptide: Mitochondrial import inner membrane translocase subunit Tim23 (209 aa).

A run of 3 helical transmembrane segments spans residues 73 to 93 (FELA…FGAM), 125 to 145 (ALWA…GVII), and 181 to 197 (GLAG…YNNW).

Belongs to the Tim17/Tim22/Tim23 family. In terms of assembly, component of the TIM23 complex at least composed of TIMM23, TIMM17 (TIMM17A or TIMM17B) and TIMM50; within this complex, directly interacts with TIMM50. The complex interacts with the TIMM44 component of the PAM complex and with DNAJC15. Upon mitochondrial depolarization, interacts with PINK1; the interaction is required for PINK1 accumulation at the outer mitochondrial membrane, kinase activation by autophosphorylation and PRKN recruitement to mitochondria.

Its subcellular location is the mitochondrion inner membrane. Its function is as follows. Essential component of the TIM23 complex, a complex that mediates the translocation of transit peptide-containing proteins across the mitochondrial inner membrane. Has a role in the activation of stress-induced mitophagy by protecting PINK1 from OMA1-mediated degradation and facilitating its accumulation at the outer mitochondrial membrane in response to depolarization. The polypeptide is Mitochondrial import inner membrane translocase subunit Tim23 (Timm23) (Mus musculus (Mouse)).